The following is a 756-amino-acid chain: Amine oxidase [copper-containing] 2 (756 aa).

The Cytoplasmic segment spans residues 1–4 (MHLK). A helical transmembrane segment spans residues 5–25 (IVLAFLALSLITIFALAYVLL). The Extracellular segment spans residues 26–756 (TSPGGSSQPP…DLPPFSYHGF (731 aa)). 3 N-linked (GlcNAc...) asparagine glycosylation sites follow: N133, N198, and N226. Catalysis depends on D380, which acts as the Proton acceptor. C398 and C424 are oxidised to a cystine. The Schiff-base intermediate with substrate; via topaquinone role is filled by Y465. Y465 is subject to 2',4',5'-topaquinone. The Cu(2+) site is built by H516 and H518. 7 residues coordinate Ca(2+): D525, L526, D527, E568, E637, F659, and N661. N-linked (GlcNAc...) asparagine glycosylation is present at N662. Residues E663, D669, and L670 each coordinate Ca(2+). H680 contacts Cu(2+). A disulfide bridge links C730 with C737.

This sequence belongs to the copper/topaquinone oxidase family. As to quaternary structure, homodimer; disulfide-linked. Probably forms heterodimers with AOC3. Requires Cu(2+) as cofactor. It depends on Ca(2+) as a cofactor. L-topaquinone serves as cofactor. In terms of processing, topaquinone (TPQ) is generated by copper-dependent autoxidation of a specific tyrosyl residue. In terms of tissue distribution, expressed in many tissues including adipocytes with higher expression in retina where it is active. Not expressed in testis. As to expression, not expressed in thymus.

Its subcellular location is the cell membrane. It localises to the cytoplasm. The enzyme catalyses 2-phenylethylamine + O2 + H2O = 2-phenylacetaldehyde + H2O2 + NH4(+). It catalyses the reaction tryptamine + O2 + H2O = indole-3-acetaldehyde + H2O2 + NH4(+). It carries out the reaction tyramine + O2 + H2O = (4-hydroxyphenyl)acetaldehyde + H2O2 + NH4(+). Functionally, catalyzes the oxidative deamination of primary amines to the corresponding aldehydes with the concomitant production of hydrogen peroxide and ammonia. Has a preference for 2-phenylethylamine, tryptamine and tyramine. Could also act on methylamine and benzylamine but much less efficiently. The chain is Amine oxidase [copper-containing] 2 from Homo sapiens (Human).